The chain runs to 505 residues: Ribose import ATP-binding protein RbsA (505 aa).

2 consecutive ABC transporter domains span residues leucine 12–lysine 249 and valine 259–serine 504. ATP is bound at residue glycine 44–serine 51.

It belongs to the ABC transporter superfamily. Ribose importer (TC 3.A.1.2.1) family. The complex is composed of an ATP-binding protein (RbsA), two transmembrane proteins (RbsC) and a solute-binding protein (RbsB).

The protein localises to the cell membrane. It carries out the reaction D-ribose(out) + ATP + H2O = D-ribose(in) + ADP + phosphate + H(+). Part of the ABC transporter complex RbsABC involved in ribose import. Responsible for energy coupling to the transport system. The protein is Ribose import ATP-binding protein RbsA of Clostridium tetani (strain Massachusetts / E88).